The following is a 111-amino-acid chain: Small ribosomal subunit protein bS16 (111 aa).

Residues Glu92–Glu111 form a disordered region. The segment covering Glu100–Glu111 has biased composition (acidic residues).

It belongs to the bacterial ribosomal protein bS16 family.

This is Small ribosomal subunit protein bS16 from Petrotoga mobilis (strain DSM 10674 / SJ95).